The chain runs to 454 residues: Metacaspase-1A (454 aa).

Residues 1 to 16 are compositionally biased toward gly residues; sequence MSYGYPGQGYGPGGGH. Residues 1–129 form a disordered region; it reads MSYGYPGQGY…GHQTRNQGSH (129 aa). 4 stretches are compositionally biased toward low complexity: residues 38 to 47, 59 to 80, 88 to 101, and 109 to 120; these read YSNPGQGQYN, YHQQ…YPPQ, GQQQ…HSQR, and GYDIYGYPIGSG. Active-site residues include His-244 and Cys-300.

Belongs to the peptidase C14B family.

In terms of biological role, involved in cell death (apoptosis). The polypeptide is Metacaspase-1A (casA) (Neurospora crassa (strain ATCC 24698 / 74-OR23-1A / CBS 708.71 / DSM 1257 / FGSC 987)).